The following is a 563-amino-acid chain: Arginine--tRNA ligase (563 aa).

Residues 121 to 131 carry the 'HIGH' region motif; sequence PNIAKPFSIGH.

It belongs to the class-I aminoacyl-tRNA synthetase family. Monomer.

It is found in the cytoplasm. The enzyme catalyses tRNA(Arg) + L-arginine + ATP = L-arginyl-tRNA(Arg) + AMP + diphosphate. The protein is Arginine--tRNA ligase of Streptococcus pneumoniae (strain ATCC BAA-255 / R6).